The primary structure comprises 427 residues: Mitochondrial distribution and morphology protein 12 (427 aa).

In terms of domain architecture, SMP-LTD spans 1 to 387 (MSFDINWNQL…WPSWICIDMN (387 aa)). A compositionally biased stretch (basic and acidic residues) spans 81 to 96 (NDSKDEHLKNHGDGIN). 2 disordered regions span residues 81–168 (NDSK…APPL) and 387–427 (NDDD…EAGE). Acidic residues predominate over residues 106–133 (LDDEDEDDEDDDEDDEDEEEEDEDDYDD). Polar residues predominate over residues 146–161 (LNFNENSTTPSANSFA). The segment covering 387-402 (NDDDDEEEEEESEDND) has biased composition (acidic residues). Positions 411–427 (NDGKHGDGRTDETEAGE) are enriched in basic and acidic residues.

This sequence belongs to the MDM12 family. In terms of assembly, component of the ER-mitochondria encounter structure (ERMES) or MDM complex, composed of MMM1, MDM10, MDM12 and MDM34. An MMM1 homodimer associates with one molecule of MDM12 on each side in a pairwise head-to-tail manner, and the SMP-LTD domains of MMM1 and MDM12 generate a continuous hydrophobic tunnel for phospholipid trafficking.

It is found in the mitochondrion outer membrane. Its subcellular location is the endoplasmic reticulum membrane. Its function is as follows. Component of the ERMES/MDM complex, which serves as a molecular tether to connect the endoplasmic reticulum (ER) and mitochondria. Components of this complex are involved in the control of mitochondrial shape and protein biogenesis, and function in nonvesicular lipid trafficking between the ER and mitochondria. MDM12 is required for the interaction of the ER-resident membrane protein MMM1 and the outer mitochondrial membrane-resident beta-barrel protein MDM10. The MDM12-MMM1 subcomplex functions in the major beta-barrel assembly pathway that is responsible for biogenesis of all mitochondrial outer membrane beta-barrel proteins, and acts in a late step after the SAM complex. The MDM10-MDM12-MMM1 subcomplex further acts in the TOM40-specific pathway after the action of the MDM12-MMM1 complex. Essential for establishing and maintaining the structure of mitochondria and maintenance of mtDNA nucleoids. The sequence is that of Mitochondrial distribution and morphology protein 12 from Candida albicans (strain WO-1) (Yeast).